The primary structure comprises 437 residues: Serine--tRNA ligase (437 aa).

244–246 is an L-serine binding site; it reads TAE. Position 275–277 (275–277) interacts with ATP; the sequence is RSE. Glutamate 298 contributes to the L-serine binding site. Position 362 to 365 (362 to 365) interacts with ATP; the sequence is EISS. Serine 397 serves as a coordination point for L-serine.

This sequence belongs to the class-II aminoacyl-tRNA synthetase family. Type-1 seryl-tRNA synthetase subfamily. In terms of assembly, homodimer. The tRNA molecule binds across the dimer.

It is found in the cytoplasm. It catalyses the reaction tRNA(Ser) + L-serine + ATP = L-seryl-tRNA(Ser) + AMP + diphosphate + H(+). The enzyme catalyses tRNA(Sec) + L-serine + ATP = L-seryl-tRNA(Sec) + AMP + diphosphate + H(+). Its pathway is aminoacyl-tRNA biosynthesis; selenocysteinyl-tRNA(Sec) biosynthesis; L-seryl-tRNA(Sec) from L-serine and tRNA(Sec): step 1/1. Catalyzes the attachment of serine to tRNA(Ser). Is also able to aminoacylate tRNA(Sec) with serine, to form the misacylated tRNA L-seryl-tRNA(Sec), which will be further converted into selenocysteinyl-tRNA(Sec). The sequence is that of Serine--tRNA ligase from Nitrosomonas eutropha (strain DSM 101675 / C91 / Nm57).